The chain runs to 193 residues: UMP-CMP kinase (193 aa).

13–18 (GAGKGT) provides a ligand contact to ATP. An NMP region spans residues 33 to 63 (SAGDLLRDERKKPDSQYGELIESYIRDGKIV). Residues arginine 39, 61-63 (KIV), and 93-96 (GFPR) each bind a ribonucleoside 5'-phosphate. A CMP-binding site is contributed by asparagine 100. Residues 133 to 143 (ERGKSSGRSDD) form an LID region. Arginine 134 contributes to the ATP binding site. Residues arginine 140 and arginine 151 each contribute to the a ribonucleoside 5'-phosphate site. Lysine 179 serves as a coordination point for ATP.

It belongs to the adenylate kinase family. UMP-CMP kinase subfamily. As to quaternary structure, monomer. Requires Mg(2+) as cofactor.

Its subcellular location is the nucleus. It localises to the cytoplasm. The enzyme catalyses CMP + ATP = CDP + ADP. It carries out the reaction dCMP + ATP = dCDP + ADP. The catalysed reaction is UMP + ATP = UDP + ADP. It catalyses the reaction a 2'-deoxyribonucleoside 5'-diphosphate + ATP = a 2'-deoxyribonucleoside 5'-triphosphate + ADP. The enzyme catalyses a ribonucleoside 5'-diphosphate + ATP = a ribonucleoside 5'-triphosphate + ADP. In terms of biological role, catalyzes the phosphorylation of pyrimidine nucleoside monophosphates at the expense of ATP. Plays an important role in de novo pyrimidine nucleotide biosynthesis. Has preference for UMP and CMP as phosphate acceptors. Also displays broad nucleoside diphosphate kinase activity. This is UMP-CMP kinase (cmpk1) from Xenopus laevis (African clawed frog).